A 509-amino-acid chain; its full sequence is Probable cytosol aminopeptidase (509 aa).

Mn(2+) contacts are provided by Lys-277 and Asp-282. Residue Lys-289 is part of the active site. Mn(2+) is bound by residues Asp-300, Asp-359, and Glu-361. Arg-363 is a catalytic residue.

The protein belongs to the peptidase M17 family. Mn(2+) serves as cofactor.

The protein resides in the cytoplasm. It carries out the reaction Release of an N-terminal amino acid, Xaa-|-Yaa-, in which Xaa is preferably Leu, but may be other amino acids including Pro although not Arg or Lys, and Yaa may be Pro. Amino acid amides and methyl esters are also readily hydrolyzed, but rates on arylamides are exceedingly low.. The catalysed reaction is Release of an N-terminal amino acid, preferentially leucine, but not glutamic or aspartic acids.. Its function is as follows. Presumably involved in the processing and regular turnover of intracellular proteins. Catalyzes the removal of unsubstituted N-terminal amino acids from various peptides. This chain is Probable cytosol aminopeptidase, found in Chloroherpeton thalassium (strain ATCC 35110 / GB-78).